Reading from the N-terminus, the 91-residue chain is Cell division protein FtsB (91 aa).

The Cytoplasmic segment spans residues 1 to 3 (MKF). Residues 4–21 (IVGLLLVLLLALQYQLWI) traverse the membrane as a helical segment. Topologically, residues 22–91 (SKDGLGELRQ…ETFFQVVEEP (70 aa)) are periplasmic. Residues 26-74 (LGELRQLSRSIKQQRHENATLIERNQVLKAEVQDLKSGLDALEERARSG) adopt a coiled-coil conformation.

This sequence belongs to the FtsB family. As to quaternary structure, part of a complex composed of FtsB, FtsL and FtsQ.

It is found in the cell inner membrane. Its function is as follows. Essential cell division protein. May link together the upstream cell division proteins, which are predominantly cytoplasmic, with the downstream cell division proteins, which are predominantly periplasmic. This Nitrosococcus oceani (strain ATCC 19707 / BCRC 17464 / JCM 30415 / NCIMB 11848 / C-107) protein is Cell division protein FtsB.